The sequence spans 540 residues: Putative cysteine ligase BshC (540 aa).

Positions G455–I491 form a coiled coil.

This sequence belongs to the BshC family.

Its function is as follows. Involved in bacillithiol (BSH) biosynthesis. May catalyze the last step of the pathway, the addition of cysteine to glucosamine malate (GlcN-Mal) to generate BSH. This chain is Putative cysteine ligase BshC, found in Desulforamulus reducens (strain ATCC BAA-1160 / DSM 100696 / MI-1) (Desulfotomaculum reducens).